A 291-amino-acid chain; its full sequence is Bifunctional protein FolD (291 aa).

NADP(+) is bound by residues 165–167 (GRS), S190, and I231.

Belongs to the tetrahydrofolate dehydrogenase/cyclohydrolase family. As to quaternary structure, homodimer.

The enzyme catalyses (6R)-5,10-methylene-5,6,7,8-tetrahydrofolate + NADP(+) = (6R)-5,10-methenyltetrahydrofolate + NADPH. The catalysed reaction is (6R)-5,10-methenyltetrahydrofolate + H2O = (6R)-10-formyltetrahydrofolate + H(+). The protein operates within one-carbon metabolism; tetrahydrofolate interconversion. Functionally, catalyzes the oxidation of 5,10-methylenetetrahydrofolate to 5,10-methenyltetrahydrofolate and then the hydrolysis of 5,10-methenyltetrahydrofolate to 10-formyltetrahydrofolate. This Azoarcus sp. (strain BH72) protein is Bifunctional protein FolD.